We begin with the raw amino-acid sequence, 1752 residues long: Serine protease/ABC transporter B family protein tagA (1752 aa).

An N-terminal signal peptide occupies residues 1 to 24; the sequence is MNKKLFIFGLSLFLFLFIFNLSLS. The N-linked (GlcNAc...) asparagine glycan is linked to Asn20. The Peptidase S8 domain occupies 280–696; sequence HYSIQSGSAS…FGNIQLSKLI (417 aa). Residues Asp312 and His352 each act as charge relay system in the active site. Residues Asn400 and Asn557 are each glycosylated (N-linked (GlcNAc...) asparagine). Ser625 serves as the catalytic Charge relay system. N-linked (GlcNAc...) asparagine glycans are attached at residues Asn653, Asn785, and Asn823. Residues 909–929 form a helical membrane-spanning segment; sequence IVLLGIFGIIIVGAVIFVLVC. The segment at 946-1032 is disordered; sequence DKGGDGNSIR…QNNSPQYDED (87 aa). The span at 962–994 shows a compositional bias: low complexity; sequence NNNNNNNNNNNNNNNNNNNNNNNNNNNNNNNNN. Asn993 carries an N-linked (GlcNAc...) asparagine glycan. Over residues 995–1004 the composition is skewed to polar residues; it reads SNGKQSNIEL. Positions 1013–1028 are enriched in low complexity; sequence GTPNGDDQQQQNNSPQ. 6 helical membrane-spanning segments follow: residues 1058–1078, 1102–1122, 1174–1194, 1200–1220, 1285–1305, and 1315–1335; these read ILGLALFLSFIDVALGLAVPL, FALIIIGMIIVQFLSGILLAL, IPHMIIQIATIGGTLIMLFII, LVVLCPLPILLVFSKFYGGYI, TSGIFEQLSVFILLWYGSSLV, and LIAFNLFLPFITGAVTQVASL. The region spanning 1059 to 1341 is the ABC transmembrane type-1 domain; it reads LGLALFLSFI…VASLYTTYKS (283 aa). The ABC transporter domain occupies 1374–1610; that stretch reads IQFNKVSFAY…KGMFYDFVQI (237 aa). ATP is bound at residue 1409–1416; the sequence is GPSGGGKS. A disordered region spans residues 1621–1686; it reads IQLPSNSRNT…SRSPPPMWRQ (66 aa). Over residues 1631–1642 the composition is skewed to basic and acidic residues; sequence RNADKLRNRSET. 3 N-linked (GlcNAc...) asparagine glycosylation sites follow: Asn1638, Asn1670, and Asn1694.

It in the C-terminal section; belongs to the ABC transporter superfamily. ABCB family. Multidrug resistance exporter (TC 3.A.1.201) subfamily. The protein in the N-terminal section; belongs to the peptidase S8 family.

Its subcellular location is the membrane. Its function is as follows. Required for a general cell fate determination at the onset of development. Required for the specification of an initial population of prespore cells in which tagA is expressed. Required for normal SDF-2 signaling during spore encapsulation. The sequence is that of Serine protease/ABC transporter B family protein tagA (tagA) from Dictyostelium discoideum (Social amoeba).